The chain runs to 507 residues: Transposase for insertion sequences IS1326/IS1353 (507 aa).

The HTH IS21-type domain maps to 6 to 68; that stretch reads ILSAIRRWHF…PFEPKLRQWL (63 aa). The segment at residues 19–40 is a DNA-binding region (H-T-H motif); the sequence is ASIREIARRSGLSRNTVRKYLQ. In terms of domain architecture, Integrase catalytic spans 122-302; it reads GCFIPLRFAC…TVQEAFADEQ (181 aa).

It belongs to the transposase IS21/IS408/IS1162 family.

In terms of biological role, required for the transposition of the insertion element. This Pseudomonas aeruginosa protein is Transposase for insertion sequences IS1326/IS1353 (istA).